The sequence spans 944 residues: Protein translocase subunit SecA (944 aa).

Residues Q90, 108 to 112 (GEGKT), and D509 each bind ATP. The tract at residues 533-565 (VKPEEGHKPPVSPQRKTKSAGFKEEKNKNLSIS) is disordered.

The protein belongs to the SecA family. Monomer and homodimer. Part of the essential Sec protein translocation apparatus which comprises SecA, SecYEG and auxiliary proteins SecDF. Other proteins may also be involved.

It localises to the cell inner membrane. The protein localises to the cellular thylakoid membrane. Its subcellular location is the cytoplasm. The catalysed reaction is ATP + H2O + cellular proteinSide 1 = ADP + phosphate + cellular proteinSide 2.. Functionally, part of the Sec protein translocase complex. Interacts with the SecYEG preprotein conducting channel. Has a central role in coupling the hydrolysis of ATP to the transfer of proteins into and across the cell membrane, serving as an ATP-driven molecular motor driving the stepwise translocation of polypeptide chains across the membrane. Probably participates in protein translocation into and across both the cytoplasmic and thylakoid membranes in cyanobacterial cells. The sequence is that of Protein translocase subunit SecA from Prochlorococcus marinus (strain NATL1A).